Here is a 105-residue protein sequence, read N- to C-terminus: Heat shock protein HspQ (105 aa).

It belongs to the HspQ family.

Its subcellular location is the cytoplasm. Involved in the degradation of certain denaturated proteins, including DnaA, during heat shock stress. This Blochmanniella floridana protein is Heat shock protein HspQ.